The sequence spans 334 residues: Amino acid--[acyl-carrier-protein] ligase 2 (334 aa).

Residue cysteine 131 coordinates Zn(2+). ATP is bound by residues arginine 159, glutamate 161, and 168-169 (RL). Glutamate 176 contributes to the Zn(2+) binding site. Residue glutamate 176 participates in an L-alpha-amino acid binding. Residues lysine 235 and 250 to 253 (ACMS) contribute to the ATP site. Position 279 (cysteine 279) interacts with Zn(2+). Arginine 286 is a binding site for ATP.

This sequence belongs to the class-II aminoacyl-tRNA synthetase family. Amino acid--[acyl-carrier-protein] ligase subfamily. In terms of assembly, homodimer. Requires Zn(2+) as cofactor.

It carries out the reaction an L-alpha-amino acid + holo-[ACP] + ATP = an L-alpha-aminoacyl-[ACP] + AMP + diphosphate. Functionally, catalyzes the ATP-dependent activation of L-glycine and its transfer to the phosphopantetheine prosthetic group covalently attached to the vicinal carrier protein blr6284 of yet unknown function. May participate in nonribosomal peptide synthesis or related processes. L-alanine is a poor substrate whereas L-serine or D-amino acids are not substrates for ATP-dependent activation. Does not display tRNA aminoacylation activity. This chain is Amino acid--[acyl-carrier-protein] ligase 2, found in Bradyrhizobium diazoefficiens (strain JCM 10833 / BCRC 13528 / IAM 13628 / NBRC 14792 / USDA 110).